The following is a 156-amino-acid chain: 3-hydroxyacyl-[acyl-carrier-protein] dehydratase FabZ (156 aa).

His-57 is a catalytic residue.

This sequence belongs to the thioester dehydratase family. FabZ subfamily.

It is found in the cytoplasm. It catalyses the reaction a (3R)-hydroxyacyl-[ACP] = a (2E)-enoyl-[ACP] + H2O. Functionally, involved in unsaturated fatty acids biosynthesis. Catalyzes the dehydration of short chain beta-hydroxyacyl-ACPs and long chain saturated and unsaturated beta-hydroxyacyl-ACPs. This chain is 3-hydroxyacyl-[acyl-carrier-protein] dehydratase FabZ, found in Anaeromyxobacter dehalogenans (strain 2CP-C).